Consider the following 336-residue polypeptide: Dihydroorotate dehydrogenase (quinone) (336 aa).

FMN-binding positions include 62 to 66 (AGLDK) and Thr86. Lys66 lines the substrate pocket. 111–115 (NRMGF) serves as a coordination point for substrate. Residues Asn139 and Asn172 each coordinate FMN. A substrate-binding site is contributed by Asn172. Catalysis depends on Ser175, which acts as the Nucleophile. Asn177 is a substrate binding site. FMN contacts are provided by Lys217 and Thr245. Residue 246 to 247 (NT) participates in substrate binding. FMN is bound by residues Gly268, Gly297, and 318 to 319 (YS).

It belongs to the dihydroorotate dehydrogenase family. Type 2 subfamily. As to quaternary structure, monomer. The cofactor is FMN.

It localises to the cell membrane. It carries out the reaction (S)-dihydroorotate + a quinone = orotate + a quinol. It functions in the pathway pyrimidine metabolism; UMP biosynthesis via de novo pathway; orotate from (S)-dihydroorotate (quinone route): step 1/1. Its function is as follows. Catalyzes the conversion of dihydroorotate to orotate with quinone as electron acceptor. The polypeptide is Dihydroorotate dehydrogenase (quinone) (Shigella flexneri serotype 5b (strain 8401)).